The following is a 203-amino-acid chain: Small ribosomal subunit protein uS4 (203 aa).

The region spanning 93-154 is the S4 RNA-binding domain; sequence RRLDNVVFRA…KSRNMDAVTD (62 aa).

It belongs to the universal ribosomal protein uS4 family. As to quaternary structure, part of the 30S ribosomal subunit. Contacts protein S5. The interaction surface between S4 and S5 is involved in control of translational fidelity.

Functionally, one of the primary rRNA binding proteins, it binds directly to 16S rRNA where it nucleates assembly of the body of the 30S subunit. With S5 and S12 plays an important role in translational accuracy. This Chlorobium luteolum (strain DSM 273 / BCRC 81028 / 2530) (Pelodictyon luteolum) protein is Small ribosomal subunit protein uS4.